We begin with the raw amino-acid sequence, 261 residues long: Cytochrome c oxidase subunit 3 (261 aa).

At 1-15 (MAHQAHAYHMVDPSP) the chain is on the mitochondrial matrix side. The chain crosses the membrane as a helical span at residues 16–34 (WPLTGAIGALFLTSGLAIW). Topologically, residues 35-40 (FHFQSV) are mitochondrial intermembrane. Residues 41 to 66 (TLLTLGLILLLLTMYQWWRDIIREGT) form a helical membrane-spanning segment. At 67 to 72 (FQGHHT) the chain is on the mitochondrial matrix side. A helical membrane pass occupies residues 73–105 (PPVQKGLRYGMILFITSEVFFFLGFFWAFYHSS). Topologically, residues 106–128 (LAPTPELGGCWPPTGITPLDPFE) are mitochondrial intermembrane. A helical transmembrane segment spans residues 129–152 (VPLLNTAVLLASGVTVTWAHHSLM). The Mitochondrial matrix portion of the chain corresponds to 153–155 (EGA). Residues 156 to 183 (RKQAIQALALTIILGVYFTALQAMEYYE) traverse the membrane as a helical segment. The Mitochondrial intermembrane portion of the chain corresponds to 184–190 (APFTIAD). The chain crosses the membrane as a helical span at residues 191–223 (GVYGSTFFVATGFHGLHVIIGSSFLAVCLLRQI). The Mitochondrial matrix segment spans residues 224–232 (QYHFTSEHH). A helical membrane pass occupies residues 233-256 (FGFEAAAWYWHFVDVVWLFLYVSI). At 257 to 261 (YWWGS) the chain is on the mitochondrial intermembrane side.

Belongs to the cytochrome c oxidase subunit 3 family. In terms of assembly, component of the cytochrome c oxidase (complex IV, CIV), a multisubunit enzyme composed of 14 subunits. The complex is composed of a catalytic core of 3 subunits MT-CO1, MT-CO2 and MT-CO3, encoded in the mitochondrial DNA, and 11 supernumerary subunits COX4I, COX5A, COX5B, COX6A, COX6B, COX6C, COX7A, COX7B, COX7C, COX8 and NDUFA4, which are encoded in the nuclear genome. The complex exists as a monomer or a dimer and forms supercomplexes (SCs) in the inner mitochondrial membrane with NADH-ubiquinone oxidoreductase (complex I, CI) and ubiquinol-cytochrome c oxidoreductase (cytochrome b-c1 complex, complex III, CIII), resulting in different assemblies (supercomplex SCI(1)III(2)IV(1) and megacomplex MCI(2)III(2)IV(2)).

The protein resides in the mitochondrion inner membrane. It catalyses the reaction 4 Fe(II)-[cytochrome c] + O2 + 8 H(+)(in) = 4 Fe(III)-[cytochrome c] + 2 H2O + 4 H(+)(out). In terms of biological role, component of the cytochrome c oxidase, the last enzyme in the mitochondrial electron transport chain which drives oxidative phosphorylation. The respiratory chain contains 3 multisubunit complexes succinate dehydrogenase (complex II, CII), ubiquinol-cytochrome c oxidoreductase (cytochrome b-c1 complex, complex III, CIII) and cytochrome c oxidase (complex IV, CIV), that cooperate to transfer electrons derived from NADH and succinate to molecular oxygen, creating an electrochemical gradient over the inner membrane that drives transmembrane transport and the ATP synthase. Cytochrome c oxidase is the component of the respiratory chain that catalyzes the reduction of oxygen to water. Electrons originating from reduced cytochrome c in the intermembrane space (IMS) are transferred via the dinuclear copper A center (CU(A)) of subunit 2 and heme A of subunit 1 to the active site in subunit 1, a binuclear center (BNC) formed by heme A3 and copper B (CU(B)). The BNC reduces molecular oxygen to 2 water molecules using 4 electrons from cytochrome c in the IMS and 4 protons from the mitochondrial matrix. The polypeptide is Cytochrome c oxidase subunit 3 (mt-co3) (Formosania lacustris (Oriental stream loach)).